Here is a 198-residue protein sequence, read N- to C-terminus: Pyridoxal 5'-phosphate synthase subunit PdxT (198 aa).

Position 52-54 (52-54 (GES)) interacts with L-glutamine. The Nucleophile role is filled by cysteine 84. L-glutamine contacts are provided by residues arginine 115 and 142–143 (IR). Residues histidine 178 and glutamate 180 each act as charge relay system in the active site.

Belongs to the glutaminase PdxT/SNO family. In the presence of PdxS, forms a dodecamer of heterodimers. Only shows activity in the heterodimer.

The enzyme catalyses aldehydo-D-ribose 5-phosphate + D-glyceraldehyde 3-phosphate + L-glutamine = pyridoxal 5'-phosphate + L-glutamate + phosphate + 3 H2O + H(+). It catalyses the reaction L-glutamine + H2O = L-glutamate + NH4(+). It functions in the pathway cofactor biosynthesis; pyridoxal 5'-phosphate biosynthesis. In terms of biological role, catalyzes the hydrolysis of glutamine to glutamate and ammonia as part of the biosynthesis of pyridoxal 5'-phosphate. The resulting ammonia molecule is channeled to the active site of PdxS. In Archaeoglobus fulgidus (strain ATCC 49558 / DSM 4304 / JCM 9628 / NBRC 100126 / VC-16), this protein is Pyridoxal 5'-phosphate synthase subunit PdxT.